The primary structure comprises 395 residues: Argininosuccinate synthase (395 aa).

Residues 9–17 (AYSGGLDTS) and A37 contribute to the ATP site. Residues Y87 and S92 each coordinate L-citrulline. ATP is bound at residue G117. L-aspartate contacts are provided by T119, N123, and D124. N123 serves as a coordination point for L-citrulline. R127, S173, S182, E258, and Y270 together coordinate L-citrulline.

Belongs to the argininosuccinate synthase family. Type 1 subfamily. In terms of assembly, homotetramer.

It is found in the cytoplasm. It carries out the reaction L-citrulline + L-aspartate + ATP = 2-(N(omega)-L-arginino)succinate + AMP + diphosphate + H(+). It functions in the pathway amino-acid biosynthesis; L-arginine biosynthesis; L-arginine from L-ornithine and carbamoyl phosphate: step 2/3. In Methanospirillum hungatei JF-1 (strain ATCC 27890 / DSM 864 / NBRC 100397 / JF-1), this protein is Argininosuccinate synthase.